Reading from the N-terminus, the 292-residue chain is 4'-phosphopantetheinyl transferase 1 (292 aa).

This sequence belongs to the P-Pant transferase superfamily.

It carries out the reaction apo-[ACP] + CoA = holo-[ACP] + adenosine 3',5'-bisphosphate + H(+). Transfers the 4'-phosphopantetheine moiety from coenzyme A to a Ser of an acyl-carrier-protein. The enzyme is able to transfer the cofactor to a broad range of enzymes with acyl- or peptidyl-carrier protein domains. Required for primary biological processes such as growth and asexual/sexual development, and activates target enzymes involved in the synthesis of metabolites such as fatty acids, nonribosomal peptides and polyketides such as the gamma-pyrones fusapyrone (FPY) and deoxyfusapyrone (dFPY). The chain is 4'-phosphopantetheinyl transferase 1 from Fusarium mangiferae (Mango malformation disease fungus).